We begin with the raw amino-acid sequence, 458 residues long: UDP-N-acetylglucosamine 1-carboxyvinyltransferase (458 aa).

A phosphoenolpyruvate-binding site is contributed by 34 to 35; it reads KN. Arginine 104 serves as a coordination point for UDP-N-acetyl-alpha-D-glucosamine. Cysteine 128 acts as the Proton donor in catalysis. Cysteine 128 bears the 2-(S-cysteinyl)pyruvic acid O-phosphothioketal mark. 2 residues coordinate UDP-N-acetyl-alpha-D-glucosamine: aspartate 319 and isoleucine 341.

Belongs to the EPSP synthase family. MurA subfamily.

The protein resides in the cytoplasm. It catalyses the reaction phosphoenolpyruvate + UDP-N-acetyl-alpha-D-glucosamine = UDP-N-acetyl-3-O-(1-carboxyvinyl)-alpha-D-glucosamine + phosphate. The protein operates within cell wall biogenesis; peptidoglycan biosynthesis. Functionally, cell wall formation. Adds enolpyruvyl to UDP-N-acetylglucosamine. This is UDP-N-acetylglucosamine 1-carboxyvinyltransferase from Prochlorococcus marinus (strain MIT 9515).